We begin with the raw amino-acid sequence, 95 residues long: Acylphosphatase 2 (95 aa).

An Acylphosphatase-like domain is found at 6 to 93; it reads RVIVTVQGRV…PLPPGFEVRP (88 aa). Catalysis depends on residues R21 and N39.

It belongs to the acylphosphatase family.

The enzyme catalyses an acyl phosphate + H2O = a carboxylate + phosphate + H(+). This is Acylphosphatase 2 (acyP2) from Ralstonia nicotianae (strain ATCC BAA-1114 / GMI1000) (Ralstonia solanacearum).